Reading from the N-terminus, the 423-residue chain is UDP-N-acetylglucosamine 1-carboxyvinyltransferase 2 (423 aa).

Lysine 23–asparagine 24 lines the phosphoenolpyruvate pocket. Arginine 96 contacts UDP-N-acetyl-alpha-D-glucosamine. The active-site Proton donor is the cysteine 120. 2-(S-cysteinyl)pyruvic acid O-phosphothioketal is present on cysteine 120. UDP-N-acetyl-alpha-D-glucosamine contacts are provided by residues arginine 125–leucine 129, aspartate 309, and valine 331.

This sequence belongs to the EPSP synthase family. MurA subfamily.

It localises to the cytoplasm. It carries out the reaction phosphoenolpyruvate + UDP-N-acetyl-alpha-D-glucosamine = UDP-N-acetyl-3-O-(1-carboxyvinyl)-alpha-D-glucosamine + phosphate. It participates in cell wall biogenesis; peptidoglycan biosynthesis. Its function is as follows. Cell wall formation. Adds enolpyruvyl to UDP-N-acetylglucosamine. In Streptococcus agalactiae serotype Ia (strain ATCC 27591 / A909 / CDC SS700), this protein is UDP-N-acetylglucosamine 1-carboxyvinyltransferase 2.